The chain runs to 1365 residues: Nuclear pore complex protein Nup154 (1365 aa).

Residues 1–508 (MTLPQAQLDF…GTHIIEVLKM (508 aa)) form a required for binding to Nup93-1 and anchoring to the nuclear pore complex region. The required for binding to chromatin stretch occupies residues 508 to 986 (MVDVLRQILL…KSINPLKGTA (479 aa)).

It belongs to the non-repetitive/WGA-negative nucleoporin family. Interacts (via N-terminus) with Nup93-1. Interacts with Nup35. Interacts with cup.

Its subcellular location is the nucleus. It localises to the nuclear pore complex. The protein resides in the chromosome. The protein localises to the nucleus membrane. It is found in the cytoplasm. Its function is as follows. Component of the nuclear pore complex. Has a role in the organization of the inner nuclear membrane proteins at the nuclear envelope. In germ cells, plays a role in the nuclear localization of components of the dpp signaling pathways, such as Medea and phosphorylated Mad. Binds to chromatin, and together with Nup62 and Nup93-1, contributes to karyosome morphology and chromatin organization including attachment to the nuclear envelope in oocytes and nurse cells. Has a role in female fertility including egg chamber development; in nurse cells, has a role in the organization of F-actin in subcortical and cytoplasmic actin filaments important for the transfer of cytoplasm from nurse cells to the growing oocytes. Has a role in male spermatogenesis and fertility. Has a role in germ line cell proliferation. This is Nuclear pore complex protein Nup154 from Drosophila melanogaster (Fruit fly).